We begin with the raw amino-acid sequence, 545 residues long: MSYSIGIDYGTASGRVFLINTTNGQVVSKFVKPYTHGVIEGELNGLKIPHTYALQNSNDYLEIMEEGISYIVRESKIDPVNIVGIGIDFTSSTIIFTDENLNPVHNLKQFKNNPHAYVKLWKHHGAYKEAEKLYQTAIENNNKWLGHYGYNVSSEWMIPKIMEVMNRAPEIMEKTAYIMEAGDWIVNKLTNKNVRSNCGLGFKAFWEEETGFHYDLFDKVDPKLSKVIQDKVSAPVVNIGEAVGKLDDKMAQKLGLSKDTMVSPFIIDAHASLLGIGSEKDKEMTMVMGTSTCHLMLNEKQHQVPGISGSVKGAIIPELFAYEAGQSAVGDLFEYVAKQAPKSYVDEAANRNMTVFELMNEKIKHQMPGESGLIALDWHNGNRSVLSDSNLTGCIFGLTLQTKHEDIYRAYLEATAFGTKMIMQQYQDWHMEVEKVFACGGIPKKNAVMMDIYTNVLNKKLIVMDSEYAPAIGAAILGAVSGGAHNSINDAVDAMKEPILYEINPEAEKVQRYETLFKAYKALHDIHGYKKANIMKDIQSLRVEG.

It belongs to the ribulokinase family.

It carries out the reaction D-ribulose + ATP = D-ribulose 5-phosphate + ADP + H(+). The catalysed reaction is L-ribulose + ATP = L-ribulose 5-phosphate + ADP + H(+). It functions in the pathway carbohydrate degradation; L-arabinose degradation via L-ribulose; D-xylulose 5-phosphate from L-arabinose (bacterial route): step 2/3. The protein is Ribulokinase of Staphylococcus aureus (strain MRSA252).